Here is a 66-residue protein sequence, read N- to C-terminus: Large ribosomal subunit protein bL33c (66 aa).

It belongs to the bacterial ribosomal protein bL33 family.

The protein localises to the plastid. Its subcellular location is the chloroplast. In Crucihimalaya wallichii (Rock-cress), this protein is Large ribosomal subunit protein bL33c.